Consider the following 325-residue polypeptide: ADP-ribose glycohydrolase MACROD1 (325 aa).

A disordered region spans residues 21–55 (LGAPRPWPGPSPGATRTRSSACGPPASLSAHHPRA). 3 positions are modified to N6-succinyllysine: K96, K103, and K129. K138 is covalently cross-linked (Glycyl lysine isopeptide (Lys-Gly) (interchain with G-Cter in SUMO2)). The region spanning 141–322 (EPKYKKDKQL…IYRERLPHYF (182 aa)) is the Macro domain. 159–161 (GDI) serves as a coordination point for substrate. Position 163 is an N6-acetyllysine (K163). Substrate contacts are provided by residues 172-174 (AAN), 179-184 (GGGGVD), 267-273 (ISTGVFG), and F306.

It belongs to the MacroD-type family. MacroD1/2-like subfamily. As to quaternary structure, interacts with ESR1; Interacts in a manner that is estrogen independent but is enhanced by estrogen. Interacts (via macro domain) with AR.

Its subcellular location is the nucleus. The catalysed reaction is 3''-O-acetyl-ADP-D-ribose + H2O = ADP-D-ribose + acetate + H(+). It carries out the reaction 2''-O-acetyl-ADP-D-ribose + H2O = ADP-D-ribose + acetate + H(+). The enzyme catalyses 4-O-(ADP-D-ribosyl)-L-aspartyl-[protein] + H2O = L-aspartyl-[protein] + ADP-D-ribose + H(+). It catalyses the reaction 5-O-(ADP-D-ribosyl)-L-glutamyl-[protein] + H2O = L-glutamyl-[protein] + ADP-D-ribose + H(+). The catalysed reaction is alpha-NAD(+) + H2O = ADP-D-ribose + nicotinamide + H(+). Its activity is regulated as follows. Subject to competitive inhibition by the product ADP-ribose. In terms of biological role, removes ADP-ribose from aspartate and glutamate residues in proteins bearing a single ADP-ribose moiety. Inactive towards proteins bearing poly-ADP-ribose. Deacetylates O-acetyl-ADP ribose, a signaling molecule generated by the deacetylation of acetylated lysine residues in histones and other proteins. Plays a role in estrogen signaling. Binds to androgen receptor (AR) and amplifies the transactivation function of AR in response to androgen. May play an important role in carcinogenesis and/or progression of hormone-dependent cancers by feed-forward mechanism that activates ESR1 transactivation. Could be an ESR1 coactivator, providing a positive feedback regulatory loop for ESR1 signal transduction. Could be involved in invasive growth by down-regulating CDH1 in endometrial cancer cells. Enhances ESR1-mediated transcription activity. The sequence is that of ADP-ribose glycohydrolase MACROD1 (MACROD1) from Bos taurus (Bovine).